We begin with the raw amino-acid sequence, 146 residues long: Large ribosomal subunit protein uL15 (146 aa).

The segment covering 1 to 13 has biased composition (basic and acidic residues); that stretch reads MKLHELKPAEGSR. Positions 1-47 are disordered; sequence MKLHELKPAEGSRKSRKRIGRGTGSGLGRNAGKGEKGQKARAGGGVR. Residues 21–31 are compositionally biased toward gly residues; it reads RGTGSGLGRNA.

The protein belongs to the universal ribosomal protein uL15 family. As to quaternary structure, part of the 50S ribosomal subunit.

Binds to the 23S rRNA. The sequence is that of Large ribosomal subunit protein uL15 from Clostridium kluyveri (strain NBRC 12016).